Here is a 194-residue protein sequence, read N- to C-terminus: AN1-type zinc finger protein 2A (194 aa).

2 AN1-type zinc fingers span residues 4 to 52 (PDLG…QKDV) and 94 to 142 (KIFT…RPTI). The Zn(2+) site is built by Cys-10, Cys-15, Cys-25, Cys-28, Cys-33, His-36, His-42, Cys-44, Cys-100, Cys-105, Cys-115, Cys-118, Cys-123, His-126, His-132, and Cys-134. The segment at 145–164 (GCSPVTASESKPSGDPHPGS) is disordered.

It localises to the cytoplasm. It is found in the nucleus. The chain is AN1-type zinc finger protein 2A (ZFAND2A) from Pongo abelii (Sumatran orangutan).